We begin with the raw amino-acid sequence, 549 residues long: Probable glucomannan 4-beta-mannosyltransferase 4 (549 aa).

Residues 35–55 (VAPVLQFAVWACMAMSVMLVL) form a helical membrane-spanning segment. The active site involves aspartate 151. Substrate is bound by residues aspartate 210 and aspartate 212. Residue aspartate 304 is part of the active site. The next 4 helical transmembrane spans lie at 383–403 (VVAPILTFLFYCVVIPLSVMV), 406–426 (VSIPVWGMVYIPTAITIMNAI), 497–517 (IYIPELMVAFYLLVCASYDLV), and 523–543 (YYLYIYLQAFAFIALGFGFAG).

It belongs to the glycosyltransferase 2 family. Plant cellulose synthase-like A subfamily.

It localises to the golgi apparatus membrane. It catalyses the reaction GDP-mannose + (glucomannan)n = GDP + (glucomannan)n+1.. Its function is as follows. Probable mannan synthase which consists of a 4-beta-mannosyltransferase activity on mannan using GDP-mannose. The beta-1,4-mannan product is the backbone for galactomannan synthesis by galactomannan galactosyltransferase. Galactomannan is a noncellulosic polysaccharides of plant cell wall. In Oryza sativa subsp. japonica (Rice), this protein is Probable glucomannan 4-beta-mannosyltransferase 4.